Reading from the N-terminus, the 54-residue chain is Large ribosomal subunit protein bL33 (54 aa).

It belongs to the bacterial ribosomal protein bL33 family.

The protein is Large ribosomal subunit protein bL33 of Corynebacterium urealyticum (strain ATCC 43042 / DSM 7109).